Reading from the N-terminus, the 379-residue chain is Origin of replication complex subunit 2 (379 aa).

The disordered stretch occupies residues 1-25 (MALRGGHAAAAAGVSSGSEDDDEEA). Residues 8 to 17 (AAAAAGVSSG) are compositionally biased toward low complexity.

This sequence belongs to the ORC2 family. Component of the origin recognition complex (ORC) composed of at least ORC1, ORC2, ORC3, ORC4, ORC5 and ORC6. ORC is regulated in a cell-cycle and development dependent manner. It is sequentially assembled at the exit from anaphase of mitosis and disassembled as cells enter S phase.

Its subcellular location is the nucleus. Essential protein. Component of the origin recognition complex (ORC) that binds origins of replication. DNA-binding is ATP-dependent, however specific DNA sequences that define origins of replication have not been identified so far. ORC is required to assemble the pre-replication complex necessary to initiate DNA replication. The chain is Origin of replication complex subunit 2 from Oryza sativa subsp. indica (Rice).